The primary structure comprises 459 residues: Vacuolar cation/proton exchanger 3 (459 aa).

At methionine 1–glutamine 67 the chain is on the cytoplasmic side. Residues glutamate 68–alanine 88 form a helical membrane-spanning segment. The Extracellular portion of the chain corresponds to asparagine 89 to arginine 95. The helical transmembrane segment at proline 96–leucine 116 threads the bilayer. Topologically, residues threonine 117 to glycine 129 are cytoplasmic. Residues glycine 130–alanine 150 traverse the membrane as a helical segment. Positions glycine 137–valine 172 are cation selection. The Extracellular portion of the chain corresponds to asparagine 151–leucine 161. A helical transmembrane segment spans residues leucine 162–isoleucine 182. Residues alanine 183 to glutamine 195 are Cytoplasmic-facing. A helical transmembrane segment spans residues alanine 196–leucine 216. Over lysine 217–arginine 238 the chain is Extracellular. The chain crosses the membrane as a helical span at residues threonine 239–histidine 259. The Cytoplasmic portion of the chain corresponds to arginine 260 to proline 283. A helical membrane pass occupies residues valine 284–leucine 304. Residues serine 305 to serine 327 lie on the Extracellular side of the membrane. The helical transmembrane segment at isoleucine 328–phenylalanine 348 threads the bilayer. The interval glycine 335 to valine 370 is cation selection. At lysine 349 to serine 362 the chain is on the cytoplasmic side. The helical transmembrane segment at alanine 363–isoleucine 383 threads the bilayer. Over lysine 384–aspartate 386 the chain is Extracellular. Residues leucine 387 to threonine 407 traverse the membrane as a helical segment. Over leucine 408–lysine 417 the chain is Cytoplasmic. Residues glycine 418 to proline 438 form a helical membrane-spanning segment. At glutamine 439–alanine 459 the chain is on the extracellular side.

This sequence belongs to the Ca(2+):cation antiporter (CaCA) (TC 2.A.19) family. Cation/proton exchanger (CAX) subfamily. In terms of tissue distribution, expressed in roots, stems and flowers.

Its subcellular location is the vacuole membrane. Inhibited by excess of Ca(2+). Vacuolar cation/proton exchanger (CAX). Translocates Ca(2+) and other metal ions into vacuoles using the proton gradient formed by H(+)-ATPase and H(+)-pyrophosphatase. Involved in ion homeostasis in association with CAX1. The chain is Vacuolar cation/proton exchanger 3 (CAX3) from Arabidopsis thaliana (Mouse-ear cress).